The primary structure comprises 346 residues: Holliday junction branch migration complex subunit RuvB (346 aa).

The interval Met-1–Tyr-182 is large ATPase domain (RuvB-L). ATP contacts are provided by residues Leu-21, Arg-22, Gly-63, Lys-66, Thr-67, Thr-68, Glu-129 to Phe-131, Arg-172, Tyr-182, and Arg-219. A Mg(2+)-binding site is contributed by Thr-67. The interval Thr-183–Leu-253 is small ATPAse domain (RuvB-S). Residues Asn-256 to Asp-346 form a head domain (RuvB-H) region. 3 residues coordinate DNA: Arg-292, Arg-311, and Arg-316.

This sequence belongs to the RuvB family. In terms of assembly, homohexamer. Forms an RuvA(8)-RuvB(12)-Holliday junction (HJ) complex. HJ DNA is sandwiched between 2 RuvA tetramers; dsDNA enters through RuvA and exits via RuvB. An RuvB hexamer assembles on each DNA strand where it exits the tetramer. Each RuvB hexamer is contacted by two RuvA subunits (via domain III) on 2 adjacent RuvB subunits; this complex drives branch migration. In the full resolvosome a probable DNA-RuvA(4)-RuvB(12)-RuvC(2) complex forms which resolves the HJ.

The protein localises to the cytoplasm. The catalysed reaction is ATP + H2O = ADP + phosphate + H(+). Functionally, the RuvA-RuvB-RuvC complex processes Holliday junction (HJ) DNA during genetic recombination and DNA repair, while the RuvA-RuvB complex plays an important role in the rescue of blocked DNA replication forks via replication fork reversal (RFR). RuvA specifically binds to HJ cruciform DNA, conferring on it an open structure. The RuvB hexamer acts as an ATP-dependent pump, pulling dsDNA into and through the RuvAB complex. RuvB forms 2 homohexamers on either side of HJ DNA bound by 1 or 2 RuvA tetramers; 4 subunits per hexamer contact DNA at a time. Coordinated motions by a converter formed by DNA-disengaged RuvB subunits stimulates ATP hydrolysis and nucleotide exchange. Immobilization of the converter enables RuvB to convert the ATP-contained energy into a lever motion, pulling 2 nucleotides of DNA out of the RuvA tetramer per ATP hydrolyzed, thus driving DNA branch migration. The RuvB motors rotate together with the DNA substrate, which together with the progressing nucleotide cycle form the mechanistic basis for DNA recombination by continuous HJ branch migration. Branch migration allows RuvC to scan DNA until it finds its consensus sequence, where it cleaves and resolves cruciform DNA. This chain is Holliday junction branch migration complex subunit RuvB, found in Rhizobium etli (strain CIAT 652).